The sequence spans 231 residues: Probable septum site-determining protein MinC (231 aa).

The segment at glycine 101–threonine 125 is disordered. The span at alanine 114–threonine 123 shows a compositional bias: low complexity.

Belongs to the MinC family. As to quaternary structure, interacts with MinD and FtsZ.

Cell division inhibitor that blocks the formation of polar Z ring septums. Rapidly oscillates between the poles of the cell to destabilize FtsZ filaments that have formed before they mature into polar Z rings. Prevents FtsZ polymerization. This chain is Probable septum site-determining protein MinC, found in Escherichia coli (strain ATCC 8739 / DSM 1576 / NBRC 3972 / NCIMB 8545 / WDCM 00012 / Crooks).